The sequence spans 377 residues: Chaperone protein DnaJ (377 aa).

Positions 5–70 (DYYQVLGVAK…QKRAAYDQYG (66 aa)) constitute a J domain. The segment at 137-215 (GYDTQIRVPS…CHGAGKTKET (79 aa)) adopts a CR-type zinc-finger fold. Zn(2+)-binding residues include C150, C153, C167, C170, C189, C192, C203, and C206. CXXCXGXG motif repeat units lie at residues 150 to 157 (CEICHGSG), 167 to 174 (CPTCNGSG), 189 to 196 (CPKCHGTG), and 203 to 210 (CTHCHGAG).

The protein belongs to the DnaJ family. As to quaternary structure, homodimer. Zn(2+) is required as a cofactor.

It is found in the cytoplasm. In terms of biological role, participates actively in the response to hyperosmotic and heat shock by preventing the aggregation of stress-denatured proteins and by disaggregating proteins, also in an autonomous, DnaK-independent fashion. Unfolded proteins bind initially to DnaJ; upon interaction with the DnaJ-bound protein, DnaK hydrolyzes its bound ATP, resulting in the formation of a stable complex. GrpE releases ADP from DnaK; ATP binding to DnaK triggers the release of the substrate protein, thus completing the reaction cycle. Several rounds of ATP-dependent interactions between DnaJ, DnaK and GrpE are required for fully efficient folding. Also involved, together with DnaK and GrpE, in the DNA replication of plasmids through activation of initiation proteins. The protein is Chaperone protein DnaJ of Paraburkholderia phymatum (strain DSM 17167 / CIP 108236 / LMG 21445 / STM815) (Burkholderia phymatum).